The primary structure comprises 642 residues: Threonine--tRNA ligase (642 aa).

Residues 1 to 61 enclose the TGS domain; the sequence is MPVITLPDGS…ETDAELSIIT (61 aa). Residues 243 to 534 are catalytic; it reads DHRKIGKQLD…LIEEYAGRFP (292 aa). Residues cysteine 334, histidine 385, and histidine 511 each coordinate Zn(2+).

The protein belongs to the class-II aminoacyl-tRNA synthetase family. Homodimer. Zn(2+) serves as cofactor.

The protein resides in the cytoplasm. The enzyme catalyses tRNA(Thr) + L-threonine + ATP = L-threonyl-tRNA(Thr) + AMP + diphosphate + H(+). In terms of biological role, catalyzes the attachment of threonine to tRNA(Thr) in a two-step reaction: L-threonine is first activated by ATP to form Thr-AMP and then transferred to the acceptor end of tRNA(Thr). Also edits incorrectly charged L-seryl-tRNA(Thr). This chain is Threonine--tRNA ligase, found in Shewanella baltica (strain OS155 / ATCC BAA-1091).